The chain runs to 514 residues: Probable cytochrome P450 6w1 (514 aa).

Position 450 (cysteine 450) interacts with heme.

The protein belongs to the cytochrome P450 family. It depends on heme as a cofactor.

The protein localises to the endoplasmic reticulum membrane. The protein resides in the microsome membrane. In terms of biological role, may be involved in the metabolism of insect hormones and in the breakdown of synthetic insecticides. The chain is Probable cytochrome P450 6w1 (Cyp6w1) from Drosophila melanogaster (Fruit fly).